We begin with the raw amino-acid sequence, 177 residues long: Large ribosomal subunit protein uL6 (177 aa).

It belongs to the universal ribosomal protein uL6 family. In terms of assembly, part of the 50S ribosomal subunit.

This protein binds to the 23S rRNA, and is important in its secondary structure. It is located near the subunit interface in the base of the L7/L12 stalk, and near the tRNA binding site of the peptidyltransferase center. This chain is Large ribosomal subunit protein uL6, found in Haemophilus ducreyi (strain 35000HP / ATCC 700724).